Consider the following 934-residue polypeptide: Aconitate hydratase A (934 aa).

The tract at residues 398–454 (EPVDESLPAKRMDSEGAVQKEGEDVAGYNSSRAGHGESAAEGAAGRQSNPVVVSSPN) is disordered. The segment covering 404–420 (LPAKRMDSEGAVQKEGE) has biased composition (basic and acidic residues). Residues 427-445 (SSRAGHGESAAEGAAGRQS) show a composition bias toward low complexity. [4Fe-4S] cluster is bound by residues Cys-473, Cys-539, and Cys-542.

Belongs to the aconitase/IPM isomerase family. Monomer. [4Fe-4S] cluster is required as a cofactor.

It carries out the reaction citrate = D-threo-isocitrate. The catalysed reaction is (2S,3R)-3-hydroxybutane-1,2,3-tricarboxylate = 2-methyl-cis-aconitate + H2O. The protein operates within carbohydrate metabolism; tricarboxylic acid cycle; isocitrate from oxaloacetate: step 2/2. Its pathway is organic acid metabolism; propanoate degradation. In terms of biological role, involved in the catabolism of short chain fatty acids (SCFA) via the tricarboxylic acid (TCA)(acetyl degradation route) and probably via the 2-methylcitrate cycle I (propionate degradation route). Catalyzes the reversible isomerization of citrate to isocitrate via cis-aconitate. Could catalyze the hydration of 2-methyl-cis-aconitate to yield (2R,3S)-2-methylisocitrate. The apo form of AcnA functions as a RNA-binding regulatory protein. In Corynebacterium diphtheriae (strain ATCC 700971 / NCTC 13129 / Biotype gravis), this protein is Aconitate hydratase A (acn).